Reading from the N-terminus, the 188-residue chain is Probable nicotinate-nucleotide adenylyltransferase (188 aa).

Belongs to the NadD family.

The catalysed reaction is nicotinate beta-D-ribonucleotide + ATP + H(+) = deamido-NAD(+) + diphosphate. It participates in cofactor biosynthesis; NAD(+) biosynthesis; deamido-NAD(+) from nicotinate D-ribonucleotide: step 1/1. Its function is as follows. Catalyzes the reversible adenylation of nicotinate mononucleotide (NaMN) to nicotinic acid adenine dinucleotide (NaAD). In Listeria monocytogenes serotype 4b (strain F2365), this protein is Probable nicotinate-nucleotide adenylyltransferase.